A 150-amino-acid chain; its full sequence is MAEETPVFQIQRVYLKDLSLEQPNSPAILLEQEQPSVDIQLGVEATPVVEGIFEVAVTATVQTKIKDKTVFLVEAKQAGIFEIRNVPEDQMGAIIGIACPQIIYPYLRGNVADTVTRAGFPPVHLAEINFQAMYEQQQAAAAEAATSTAQ.

Belongs to the SecB family. As to quaternary structure, homotetramer, a dimer of dimers. One homotetramer interacts with 1 SecA dimer.

It localises to the cytoplasm. One of the proteins required for the normal export of preproteins out of the cell cytoplasm. It is a molecular chaperone that binds to a subset of precursor proteins, maintaining them in a translocation-competent state. It also specifically binds to its receptor SecA. This is Protein-export protein SecB from Acidovorax ebreus (strain TPSY) (Diaphorobacter sp. (strain TPSY)).